The chain runs to 256 residues: tRNA-cytidine(32) 2-sulfurtransferase (256 aa).

The short motif at 35–40 (SGGKDS) is the PP-loop motif element. [4Fe-4S] cluster-binding residues include C110, C113, and C201.

It belongs to the TtcA family. Homodimer. Mg(2+) is required as a cofactor. The cofactor is [4Fe-4S] cluster.

Its subcellular location is the cytoplasm. It carries out the reaction cytidine(32) in tRNA + S-sulfanyl-L-cysteinyl-[cysteine desulfurase] + AH2 + ATP = 2-thiocytidine(32) in tRNA + L-cysteinyl-[cysteine desulfurase] + A + AMP + diphosphate + H(+). It functions in the pathway tRNA modification. Functionally, catalyzes the ATP-dependent 2-thiolation of cytidine in position 32 of tRNA, to form 2-thiocytidine (s(2)C32). The sulfur atoms are provided by the cysteine/cysteine desulfurase (IscS) system. This is tRNA-cytidine(32) 2-sulfurtransferase from Coxiella burnetii (strain RSA 331 / Henzerling II).